Consider the following 272-residue polypeptide: Regulatory factor X-associated protein (272 aa).

Disordered stretches follow at residues methionine 1–histidine 20, leucine 74–threonine 142, and lysine 175–glycine 195. The span at glycine 79–aspartate 94 shows a compositional bias: acidic residues. Positions lysine 163–lysine 178 match the Nuclear localization signal motif. A Glycyl lysine isopeptide (Lys-Gly) (interchain with G-Cter in SUMO2) cross-link involves residue lysine 198. The C-terminal domain stretch occupies residues threonine 214–threonine 270.

The RFX heterotetrameric complex consists of 2 molecules of RFX5 and one each of RFXAP and RFX-B/RFXANK; with each subunit representing a separate complementation group. RFX forms cooperative DNA binding complexes with X2BP and CBF/NF-Y. RFX associates with CIITA to form an active transcriptional complex. Post-translationally, phosphorylated. In terms of tissue distribution, ubiquitous.

The protein localises to the nucleus. Part of the RFX complex that binds to the X-box of MHC II promoters. This is Regulatory factor X-associated protein (RFXAP) from Homo sapiens (Human).